The chain runs to 124 residues: Large ribosomal subunit protein bL12 (124 aa).

Residues 101 to 115 (ALSKDDAEKAKKELE) are compositionally biased toward basic and acidic residues. The segment at 101-124 (ALSKDDAEKAKKELEEAGATVELK) is disordered.

The protein belongs to the bacterial ribosomal protein bL12 family. As to quaternary structure, homodimer. Part of the ribosomal stalk of the 50S ribosomal subunit. Forms a multimeric L10(L12)X complex, where L10 forms an elongated spine to which 2 to 4 L12 dimers bind in a sequential fashion. Binds GTP-bound translation factors.

Its function is as follows. Forms part of the ribosomal stalk which helps the ribosome interact with GTP-bound translation factors. Is thus essential for accurate translation. This Hahella chejuensis (strain KCTC 2396) protein is Large ribosomal subunit protein bL12.